Consider the following 169-residue polypeptide: Mitochondrial ATP-independent inner membrane protease subunit 1b (169 aa).

Catalysis depends on residues Ser47 and Lys91.

This sequence belongs to the peptidase S26 family. IMP1 subfamily. Heterodimer of 2 subunits, IMP1A/B and IMP12.

The protein resides in the mitochondrion inner membrane. Catalyzes the removal of transit peptides required for the targeting of proteins from the mitochondrial matrix, across the inner membrane, into the inter-membrane space. This is Mitochondrial ATP-independent inner membrane protease subunit 1b from Arabidopsis thaliana (Mouse-ear cress).